The sequence spans 1059 residues: Probable sucrose-phosphate synthase (1059 aa).

Disordered stretches follow at residues 95 to 145, 671 to 695, 710 to 731, and 748 to 769; these read AVQR…VKSR, RHPQ…GDSL, DGER…NATD, and SKDT…ASKF. A compositionally biased stretch (basic and acidic residues) spans 102-114; the sequence is RRLERERGRREAT. Residues 681-691 are compositionally biased toward acidic residues; the sequence is GGESSESEESP.

The protein belongs to the glycosyltransferase 1 family. As to quaternary structure, homodimer or homotetramer.

It carries out the reaction beta-D-fructose 6-phosphate + UDP-alpha-D-glucose = sucrose 6(F)-phosphate + UDP + H(+). It functions in the pathway glycan biosynthesis; sucrose biosynthesis; sucrose from D-fructose 6-phosphate and UDP-alpha-D-glucose: step 1/2. Activity is regulated by phosphorylation and moderated by concentration of metabolites and light. Its function is as follows. Plays a role in photosynthetic sucrose synthesis by catalyzing the rate-limiting step of sucrose biosynthesis from UDP-glucose and fructose- 6-phosphate. Involved in the regulation of carbon partitioning in the leaves of plants. May regulate the synthesis of sucrose and therefore play a major role as a limiting factor in the export of photoassimilates out of the leaf. Plays a role for sucrose availability that is essential for plant growth and fiber elongation. The sequence is that of Probable sucrose-phosphate synthase (SPS) from Vicia faba (Broad bean).